We begin with the raw amino-acid sequence, 472 residues long: Eukaryotic translation initiation factor 2 subunit 3, X-linked (472 aa).

Position 2 is an N-acetylalanine (Ala-2). Ser-16 carries the post-translational modification Phosphoserine. The tr-type G domain occupies Gln-39–Arg-248. Residues Gly-48 to Ser-55 are G1. Ala-51 to Thr-56 is a binding site for GTP. A G2 region spans residues Asn-76–Lys-80. Residues Asp-134–Gly-137 form a G3 region. Residues Asn-190–Asp-193 and Ser-225–Gln-227 contribute to the GTP site. The segment at Asn-190–Asp-193 is G4. The interval Ser-225 to Gln-227 is G5. The tract at residues Gly-457–Val-469 is interacts with Cdc123.

The protein belongs to the TRAFAC class translation factor GTPase superfamily. Classic translation factor GTPase family. EIF2G subfamily. As to quaternary structure, eukaryotic translation initiation factor 2 eIF2 is a heterotrimeric complex composed of an alpha (EIF2S1), a beta (EIF2S2) and a gamma (EIF2S3) chain. eIF2 is member of the 43S pre-initiation complex (43S PIC). Interacts (via C-terminus) with CDC123; the interaction is direct. As to expression, widely expressed.

The protein resides in the cytoplasm. Its subcellular location is the cytosol. The catalysed reaction is GTP + H2O = GDP + phosphate + H(+). Its function is as follows. Member of the eIF2 complex that functions in the early steps of protein synthesis by forming a ternary complex with GTP and initiator tRNA. This complex binds to a 40S ribosomal subunit, followed by mRNA binding to form the 43S pre-initiation complex (43S PIC). Junction of the 60S ribosomal subunit to form the 80S initiation complex is preceded by hydrolysis of the GTP bound to eIF2 and release of an eIF2-GDP binary complex. In order for eIF2 to recycle and catalyze another round of initiation, the GDP bound to eIF2 must exchange with GTP by way of a reaction catalyzed by eIF-2B. Along with its paralog on chromosome Y, may contribute to spermatogenesis up to the round spermatid stage. This is Eukaryotic translation initiation factor 2 subunit 3, X-linked (Eif2s3) from Rattus norvegicus (Rat).